Consider the following 90-residue polypeptide: Probable Fe(2+)-trafficking protein (90 aa).

This sequence belongs to the Fe(2+)-trafficking protein family.

Functionally, could be a mediator in iron transactions between iron acquisition and iron-requiring processes, such as synthesis and/or repair of Fe-S clusters in biosynthetic enzymes. This is Probable Fe(2+)-trafficking protein from Polaromonas sp. (strain JS666 / ATCC BAA-500).